The chain runs to 282 residues: Putative 1-acyl-sn-glycerol-3-phosphate acyltransferase acl-2 (282 aa).

The next 2 membrane-spanning stretches (helical) occupy residues 4-24 and 32-52; these read FWSI…NIST and ISFY…TMIP. The HXXXXD motif motif lies at 98-103; that stretch reads HQSSLD. A helical transmembrane segment spans residues 122–142; that stretch reads ILAYVPFFNLGAYFSNTIFID.

It belongs to the 1-acyl-sn-glycerol-3-phosphate acyltransferase family.

It is found in the membrane. The catalysed reaction is a 1-acyl-sn-glycero-3-phosphate + an acyl-CoA = a 1,2-diacyl-sn-glycero-3-phosphate + CoA. The protein operates within phospholipid metabolism; CDP-diacylglycerol biosynthesis; CDP-diacylglycerol from sn-glycerol 3-phosphate: step 2/3. In terms of biological role, converts lysophosphatidic acid (LPA) into phosphatidic acid by incorporating an acyl moiety at the sn-2 position of the glycerol backbone. In Caenorhabditis elegans, this protein is Putative 1-acyl-sn-glycerol-3-phosphate acyltransferase acl-2 (acl-2).